The following is a 396-amino-acid chain: Alanine racemase (396 aa).

The active-site Proton acceptor; specific for D-alanine is the Lys-46. N6-(pyridoxal phosphate)lysine is present on Lys-46. Position 145 (Arg-145) interacts with substrate. Residue Tyr-280 is the Proton acceptor; specific for L-alanine of the active site. Met-328 is a binding site for substrate.

It belongs to the alanine racemase family. Requires pyridoxal 5'-phosphate as cofactor.

The catalysed reaction is L-alanine = D-alanine. The protein operates within amino-acid biosynthesis; D-alanine biosynthesis; D-alanine from L-alanine: step 1/1. Catalyzes the interconversion of L-alanine and D-alanine. May also act on other amino acids. The sequence is that of Alanine racemase (alr) from Brucella ovis (strain ATCC 25840 / 63/290 / NCTC 10512).